Here is a 235-residue protein sequence, read N- to C-terminus: Phosphoribosylaminoimidazole-succinocarboxamide synthase (235 aa).

Belongs to the SAICAR synthetase family.

The catalysed reaction is 5-amino-1-(5-phospho-D-ribosyl)imidazole-4-carboxylate + L-aspartate + ATP = (2S)-2-[5-amino-1-(5-phospho-beta-D-ribosyl)imidazole-4-carboxamido]succinate + ADP + phosphate + 2 H(+). It participates in purine metabolism; IMP biosynthesis via de novo pathway; 5-amino-1-(5-phospho-D-ribosyl)imidazole-4-carboxamide from 5-amino-1-(5-phospho-D-ribosyl)imidazole-4-carboxylate: step 1/2. The polypeptide is Phosphoribosylaminoimidazole-succinocarboxamide synthase (Clostridium kluyveri (strain NBRC 12016)).